A 147-amino-acid chain; its full sequence is Epididymal secretory protein E3-alpha (147 aa).

The N-terminal stretch at 1–25 is a signal peptide; it reads MTSSLKIWGILLALLCILCRLCVYS.

In terms of tissue distribution, epididymis, with predominant expression in the corpus region. Moderately expressed in the vas deferens; only low levels are detectable in the caput and cauda regions.

Its subcellular location is the secreted. Its function is as follows. Possible function in sperm maturation. This is Epididymal secretory protein E3-alpha (EDDM3A) from Homo sapiens (Human).